A 463-amino-acid polypeptide reads, in one-letter code: Methionine aminopeptidase 2-1 (463 aa).

Over residues 1–12 (MGSKTPDGHRQG) the composition is skewed to basic and acidic residues. Positions 1 to 96 (MGSKTPDGHR…SGQQTTPPRV (96 aa)) are disordered. A compositionally biased stretch (acidic residues) spans 41-53 (SGEDDEDGDDDEE). Positions 58–67 (DLNSRAQPNN) are enriched in polar residues. Residues 70 to 85 (KKRKRKNNKKKKKKRP) are compositionally biased toward basic residues. His215 is a binding site for substrate. Residues Asp236, Asp247, and His316 each contribute to the a divalent metal cation site. His324 is a binding site for substrate. A divalent metal cation is bound by residues Glu349 and Glu444.

This sequence belongs to the peptidase M24A family. Methionine aminopeptidase eukaryotic type 2 subfamily. Co(2+) serves as cofactor. The cofactor is Zn(2+). It depends on Mn(2+) as a cofactor. Requires Fe(2+) as cofactor.

Its subcellular location is the cytoplasm. It catalyses the reaction Release of N-terminal amino acids, preferentially methionine, from peptides and arylamides.. Cotranslationally removes the N-terminal methionine from nascent proteins. The N-terminal methionine is often cleaved when the second residue in the primary sequence is small and uncharged (Met-Ala-, Cys, Gly, Pro, Ser, Thr, or Val). The sequence is that of Methionine aminopeptidase 2-1 from Arthroderma otae (strain ATCC MYA-4605 / CBS 113480) (Microsporum canis).